The following is a 556-amino-acid chain: MKSDIEIAQSVPLKPITEIVKKVGIDGDDLELYGNYKAKLSFEKIKSVKGNKPGKLILVTAINPTPAGEGKSTMSIGLADALTKIGKKTMLALREPSLGPVMGIKGGAAGGGYAQVLPMEDINLHFTGDMHAITTAHNALSALIDNHLQQGNELGIDPRRIIWKRVLDLNDRSLRQVIVGLGSPVNGVPREDGFDITVASEVMAILCLATDLKDLKARLANIVIAYRYDKSPVYVRDLKVEGALALILKDAIKPNLVQTIYGTPAFVHGGPFANIAHGCNSVLATSTALRLADYTVTEAGFGADLGAEKFLNIKTPNLPKAPDAVVIVATLRALKMHGGVAKADLTFENTAAVRSGFANLKRHVENIRKFNIPVVVAINEFVTDTKAEIQVLKELCAEIAVPVELASVWAKGADGGIALANAVVSAIAEESAAYKRLYADKDSLEEKLRAIVTEIYGGRAVQFGPKAKNQLKQFAQFGWDQLPVCMAKTQYSFSDDPSLLGAPDQFDITIRELVPKTGAGFIVALTGDVMTMPGLPKTPAAMKMDVTEDGTAVGLF.

65–72 is a binding site for ATP; sequence TPAGEGKS.

This sequence belongs to the formate--tetrahydrofolate ligase family.

It catalyses the reaction (6S)-5,6,7,8-tetrahydrofolate + formate + ATP = (6R)-10-formyltetrahydrofolate + ADP + phosphate. It participates in one-carbon metabolism; tetrahydrofolate interconversion. The protein is Formate--tetrahydrofolate ligase of Streptococcus equi subsp. zooepidemicus (strain H70).